Here is a 137-residue protein sequence, read N- to C-terminus: Seminal plasma sperm motility inhibitor (137 aa).

The first 21 residues, Met1–Thr21, serve as a signal peptide directing secretion. An intrachain disulfide couples Cys30 to Cys51. Residues Cys30–Ile131 form the CUB domain. N-linked (GlcNAc...) asparagine glycosylation is present at Asn36.

This sequence belongs to the spermadhesin family. Seminal plasma or sperm.

It localises to the secreted. Functionally, inhibitor of sperm motility. This Sus scrofa (Pig) protein is Seminal plasma sperm motility inhibitor (SPMI).